The following is a 113-amino-acid chain: MEERAQHCLSRLLDNSALKQQELPIHRLYFTARRVLFVFFATGIFCLCMGIILILSARSTQEIEINYTRICANCAKLRENASNFDKECTCSIPFYLSGKMMVGEIQETRLTLH.

The Cytoplasmic portion of the chain corresponds to 1–34 (MEERAQHCLSRLLDNSALKQQELPIHRLYFTARR). A helical membrane pass occupies residues 35–55 (VLFVFFATGIFCLCMGIILIL). The Extracellular portion of the chain corresponds to 56–113 (SARSTQEIEINYTRICANCAKLRENASNFDKECTCSIPFYLSGKMMVGEIQETRLTLH). An N-linked (GlcNAc...) asparagine glycan is attached at Asn66.

Belongs to the CDC50/LEM3 family. In terms of tissue distribution, specifically expressed in testis.

The protein localises to the membrane. This Homo sapiens (Human) protein is Cell cycle control protein 50C.